The sequence spans 177 residues: Macro domain-containing protein in non 5'region (177 aa).

The Macro domain occupies 1-177 (MSTSVSPVVR…VEFEEVLAMR (177 aa)).

This sequence belongs to the MacroD-type family.

This is Macro domain-containing protein in non 5'region from Streptomyces griseus.